A 175-amino-acid chain; its full sequence is ATP synthase subunit b (175 aa).

The chain crosses the membrane as a helical span at residues 24–44; sequence LVLWQIAATVILIIVVRIFLW.

Belongs to the ATPase B chain family. In terms of assembly, F-type ATPases have 2 components, F(1) - the catalytic core - and F(0) - the membrane proton channel. F(1) has five subunits: alpha(3), beta(3), gamma(1), delta(1), epsilon(1). F(0) has three main subunits: a(1), b(2) and c(10-14). The alpha and beta chains form an alternating ring which encloses part of the gamma chain. F(1) is attached to F(0) by a central stalk formed by the gamma and epsilon chains, while a peripheral stalk is formed by the delta and b chains.

Its subcellular location is the cell membrane. Its function is as follows. F(1)F(0) ATP synthase produces ATP from ADP in the presence of a proton or sodium gradient. F-type ATPases consist of two structural domains, F(1) containing the extramembraneous catalytic core and F(0) containing the membrane proton channel, linked together by a central stalk and a peripheral stalk. During catalysis, ATP synthesis in the catalytic domain of F(1) is coupled via a rotary mechanism of the central stalk subunits to proton translocation. In terms of biological role, component of the F(0) channel, it forms part of the peripheral stalk, linking F(1) to F(0). The protein is ATP synthase subunit b of Acholeplasma laidlawii (strain PG-8A).